The primary structure comprises 776 residues: Mitochondrial intermediate peptidase (776 aa).

Residues 1-28 (MRRFSTLSRRLQRVVPASSASTANTSPS) constitute a mitochondrion transit peptide. Histidine 561 is a binding site for Zn(2+). Glutamate 562 is a catalytic residue. The Zn(2+) site is built by histidine 565 and histidine 568.

It belongs to the peptidase M3 family. Zn(2+) serves as cofactor.

It localises to the mitochondrion matrix. The catalysed reaction is Release of an N-terminal octapeptide as second stage of processing of some proteins imported into the mitochondrion.. In terms of biological role, cleaves proteins, imported into the mitochondrion, to their mature size. While most mitochondrial precursor proteins are processed to the mature form in one step by mitochondrial processing peptidase (MPP), the sequential cleavage by MIP of an octapeptide after initial processing by MPP is a required step for a subgroup of nuclear-encoded precursor proteins destined for the matrix or the inner membrane. This Yarrowia lipolytica (strain CLIB 122 / E 150) (Yeast) protein is Mitochondrial intermediate peptidase (OCT1).